Consider the following 313-residue polypeptide: MKKQLIIGTRSSPLALWQAEFTKAELSRHFPELDITLKLVKTTGDVLLDSPLSKIGDMGLFTKDIEKHLIAKEIDLAVHSLKDVPTSTPEGLIITSFTEREDTRDVIISKGGAKLADLPLNAKVATSSLRRMSQLKSLRPDFEICDIRGNLNTRFKKFDEGEFDAMMLAYAGVFRLNFSDRISEILPHEIMLPAVGQGALGIETRVDDEQTREIVRILNHSNTEYCCKAERALLRHLQGGCQIPIGAYASFKNGTLKLLAFVGSVDGTVGINNEITRSGLTSPDQAEEAGIALAEELLKQGADKILSEIRKTR.

An S-(dipyrrolylmethanemethyl)cysteine modification is found at cysteine 241.

It belongs to the HMBS family. As to quaternary structure, monomer. Dipyrromethane serves as cofactor.

The enzyme catalyses 4 porphobilinogen + H2O = hydroxymethylbilane + 4 NH4(+). It functions in the pathway porphyrin-containing compound metabolism; protoporphyrin-IX biosynthesis; coproporphyrinogen-III from 5-aminolevulinate: step 2/4. Its pathway is porphyrin-containing compound metabolism; chlorophyll biosynthesis. In terms of biological role, tetrapolymerization of the monopyrrole PBG into the hydroxymethylbilane pre-uroporphyrinogen in several discrete steps. The polypeptide is Porphobilinogen deaminase (Chlorobium limicola (strain DSM 245 / NBRC 103803 / 6330)).